The chain runs to 221 residues: Ribosomal RNA small subunit methyltransferase G 3 (221 aa).

Residues G85, F90, I136–E137, and R150 contribute to the S-adenosyl-L-methionine site.

The protein belongs to the methyltransferase superfamily. RNA methyltransferase RsmG family.

It localises to the cytoplasm. It carries out the reaction guanosine(527) in 16S rRNA + S-adenosyl-L-methionine = N(7)-methylguanosine(527) in 16S rRNA + S-adenosyl-L-homocysteine. Functionally, specifically methylates the N7 position of guanine in position 527 of 16S rRNA. This Bdellovibrio bacteriovorus (strain ATCC 15356 / DSM 50701 / NCIMB 9529 / HD100) protein is Ribosomal RNA small subunit methyltransferase G 3.